Reading from the N-terminus, the 969-residue chain is Activity-dependent neuroprotective protein a (969 aa).

Residues phenylalanine 74–histidine 97 form a C2H2-type 1 zinc finger. The C2H2-type 2; atypical zinc-finger motif lies at leucine 107–histidine 129. C2H2-type zinc fingers lie at residues tyrosine 169–histidine 192 and isoleucine 221–histidine 244. Residues lysine 401–histidine 423 form a C2H2-type 5; atypical zinc finger. The C2H2-type 6; atypical zinc finger occupies serine 443–histidine 464. The C2H2-type 7 zinc-finger motif lies at leucine 466–histidine 489. The C2H2-type 8; atypical zinc-finger motif lies at threonine 583–histidine 608. The C2H2-type 9; atypical zinc finger occupies tyrosine 623 to histidine 647. A disordered region spans residues lysine 659–lysine 689. Residues alanine 732–phenylalanine 774 constitute a DNA-binding region (homeobox). The segment at aspartate 911–serine 949 is disordered. Positions serine 929–serine 946 are enriched in polar residues.

In terms of assembly, interacts with catenin beta-1/ctnnb1.

It is found in the nucleus. Functionally, may be involved in transcriptional regulation. Positively modulates wnt-beta-catenin/ctnnb1 signaling. Required for embryonic neurogenesis. Required for progression through late erythroid differentiation. This chain is Activity-dependent neuroprotective protein a, found in Danio rerio (Zebrafish).